We begin with the raw amino-acid sequence, 618 residues long: Serine/threonine-protein kinase pkn1 (618 aa).

The Protein kinase domain occupies 15-381 (YKILCYLRKG…KEEVKPQPLF (367 aa)). Residues 21 to 29 (LRKGLWCQD) and K44 each bind ATP.

It belongs to the protein kinase superfamily. Ser/Thr protein kinase family. Autophosphorylated on serine and threonine residues.

It carries out the reaction L-seryl-[protein] + ATP = O-phospho-L-seryl-[protein] + ADP + H(+). It catalyses the reaction L-threonyl-[protein] + ATP = O-phospho-L-threonyl-[protein] + ADP + H(+). Its function is as follows. Together with the serine/threonine kinase PknD, may play a role in the specific interactions with host proteins during intracellular growth. The protein is Serine/threonine-protein kinase pkn1 (pkn1) of Chlamydia caviae (strain ATCC VR-813 / DSM 19441 / 03DC25 / GPIC) (Chlamydophila caviae).